The primary structure comprises 273 residues: Dermonecrotic toxin SdSicTox-betaIIB1aiii (273 aa).

The active site involves histidine 4. Mg(2+) contacts are provided by glutamate 24 and aspartate 26. Histidine 40 serves as the catalytic Nucleophile. 2 cysteine pairs are disulfide-bonded: cysteine 44/cysteine 50 and cysteine 46/cysteine 189. A Mg(2+)-binding site is contributed by aspartate 84.

The protein belongs to the arthropod phospholipase D family. Class II subfamily. Mg(2+) is required as a cofactor. As to expression, expressed by the venom gland.

It is found in the secreted. The catalysed reaction is an N-(acyl)-sphingosylphosphocholine = an N-(acyl)-sphingosyl-1,3-cyclic phosphate + choline. It carries out the reaction an N-(acyl)-sphingosylphosphoethanolamine = an N-(acyl)-sphingosyl-1,3-cyclic phosphate + ethanolamine. It catalyses the reaction a 1-acyl-sn-glycero-3-phosphocholine = a 1-acyl-sn-glycero-2,3-cyclic phosphate + choline. The enzyme catalyses a 1-acyl-sn-glycero-3-phosphoethanolamine = a 1-acyl-sn-glycero-2,3-cyclic phosphate + ethanolamine. Dermonecrotic toxins cleave the phosphodiester linkage between the phosphate and headgroup of certain phospholipids (sphingolipid and lysolipid substrates), forming an alcohol (often choline) and a cyclic phosphate. This toxin acts on sphingomyelin (SM). It may also act on ceramide phosphoethanolamine (CPE), lysophosphatidylcholine (LPC) and lysophosphatidylethanolamine (LPE), but not on lysophosphatidylserine (LPS), and lysophosphatidylglycerol (LPG). It acts by transphosphatidylation, releasing exclusively cyclic phosphate products as second products. Induces dermonecrosis, hemolysis, increased vascular permeability, edema, inflammatory response, and platelet aggregation. In Sicarius cf. damarensis (strain GJB-2008) (Six-eyed sand spider), this protein is Dermonecrotic toxin SdSicTox-betaIIB1aiii.